Reading from the N-terminus, the 170-residue chain is Peptide deformylase (170 aa).

Cys-94 and His-136 together coordinate Fe cation. Glu-137 is an active-site residue. His-140 serves as a coordination point for Fe cation.

The protein belongs to the polypeptide deformylase family. Requires Fe(2+) as cofactor.

The catalysed reaction is N-terminal N-formyl-L-methionyl-[peptide] + H2O = N-terminal L-methionyl-[peptide] + formate. In terms of biological role, removes the formyl group from the N-terminal Met of newly synthesized proteins. Requires at least a dipeptide for an efficient rate of reaction. N-terminal L-methionine is a prerequisite for activity but the enzyme has broad specificity at other positions. The chain is Peptide deformylase from Wolinella succinogenes (strain ATCC 29543 / DSM 1740 / CCUG 13145 / JCM 31913 / LMG 7466 / NCTC 11488 / FDC 602W) (Vibrio succinogenes).